A 343-amino-acid polypeptide reads, in one-letter code: Holliday junction branch migration complex subunit RuvB (343 aa).

The large ATPase domain (RuvB-L) stretch occupies residues 1–185; the sequence is MMNENLDATG…FGISSRLQYY (185 aa). Residues L24, R25, G66, K69, T70, T71, 132–134, R175, Y185, and R222 contribute to the ATP site; that span reads EDY. T70 serves as a coordination point for Mg(2+). The interval 186–256 is small ATPAse domain (RuvB-S); the sequence is STELLSGIVE…IAKFGLKALN (71 aa). The tract at residues 259–343 is head domain (RuvB-H); it reads AHGLDEMDNK…GSNQGGLFDN (85 aa). Residues R314 and R319 each coordinate DNA.

It belongs to the RuvB family. As to quaternary structure, homohexamer. Forms an RuvA(8)-RuvB(12)-Holliday junction (HJ) complex. HJ DNA is sandwiched between 2 RuvA tetramers; dsDNA enters through RuvA and exits via RuvB. An RuvB hexamer assembles on each DNA strand where it exits the tetramer. Each RuvB hexamer is contacted by two RuvA subunits (via domain III) on 2 adjacent RuvB subunits; this complex drives branch migration. In the full resolvosome a probable DNA-RuvA(4)-RuvB(12)-RuvC(2) complex forms which resolves the HJ.

The protein resides in the cytoplasm. It catalyses the reaction ATP + H2O = ADP + phosphate + H(+). In terms of biological role, the RuvA-RuvB-RuvC complex processes Holliday junction (HJ) DNA during genetic recombination and DNA repair, while the RuvA-RuvB complex plays an important role in the rescue of blocked DNA replication forks via replication fork reversal (RFR). RuvA specifically binds to HJ cruciform DNA, conferring on it an open structure. The RuvB hexamer acts as an ATP-dependent pump, pulling dsDNA into and through the RuvAB complex. RuvB forms 2 homohexamers on either side of HJ DNA bound by 1 or 2 RuvA tetramers; 4 subunits per hexamer contact DNA at a time. Coordinated motions by a converter formed by DNA-disengaged RuvB subunits stimulates ATP hydrolysis and nucleotide exchange. Immobilization of the converter enables RuvB to convert the ATP-contained energy into a lever motion, pulling 2 nucleotides of DNA out of the RuvA tetramer per ATP hydrolyzed, thus driving DNA branch migration. The RuvB motors rotate together with the DNA substrate, which together with the progressing nucleotide cycle form the mechanistic basis for DNA recombination by continuous HJ branch migration. Branch migration allows RuvC to scan DNA until it finds its consensus sequence, where it cleaves and resolves cruciform DNA. The polypeptide is Holliday junction branch migration complex subunit RuvB (Christiangramia forsetii (strain DSM 17595 / CGMCC 1.15422 / KT0803) (Gramella forsetii)).